The following is a 344-amino-acid chain: Phenylalanine--tRNA ligase alpha subunit (344 aa).

Glu255 is a Mg(2+) binding site.

This sequence belongs to the class-II aminoacyl-tRNA synthetase family. Phe-tRNA synthetase alpha subunit type 1 subfamily. In terms of assembly, tetramer of two alpha and two beta subunits. The cofactor is Mg(2+).

It is found in the cytoplasm. The enzyme catalyses tRNA(Phe) + L-phenylalanine + ATP = L-phenylalanyl-tRNA(Phe) + AMP + diphosphate + H(+). This chain is Phenylalanine--tRNA ligase alpha subunit, found in Persephonella marina (strain DSM 14350 / EX-H1).